Here is a 115-residue protein sequence, read N- to C-terminus: MQQESDRNEQGYSSSPPSSNKQDSSDDTKKNHRREKNRIAAQKSRQRQTEKADSLHIESENLERLNSALRGEISGLREELKYLTCVLSTHQPVCVLGPTKPQAILPHVGSTRYQH.

Residues 1 to 60 (MQQESDRNEQGYSSSPPSSNKQDSSDDTKKNHRREKNRIAAQKSRQRQTEKADSLHIESE) form a disordered region. Low complexity predominate over residues 13–22 (SSSPPSSNKQ). In terms of domain architecture, bZIP spans 27-90 (DTKKNHRREK…KYLTCVLSTH (64 aa)). The interval 29–51 (KKNHRREKNRIAAQKSRQRQTEK) is basic motif. Over residues 47-60 (RQTEKADSLHIESE) the composition is skewed to basic and acidic residues. Residues 55-83 (LHIESENLERLNSALRGEISGLREELKYL) are leucine-zipper.

The protein belongs to the bZIP family.

The protein localises to the nucleus. The protein resides in the cytoplasm. AP-1 family transcription factor that controls the differentiation of lineage-specific cells in the immune system: specifically mediates the differentiation of T-helper 17 cells (Th17), follicular T-helper cells (TfH), CD8(+) dendritic cells and class-switch recombination (CSR) in B-cells. The polypeptide is Basic leucine zipper transcriptional factor ATF-like (batf) (Xenopus laevis (African clawed frog)).